The primary structure comprises 89 residues: Small ribosomal subunit protein uS15 (89 aa).

It belongs to the universal ribosomal protein uS15 family. As to quaternary structure, part of the 30S ribosomal subunit. Forms a bridge to the 50S subunit in the 70S ribosome, contacting the 23S rRNA.

Functionally, one of the primary rRNA binding proteins, it binds directly to 16S rRNA where it helps nucleate assembly of the platform of the 30S subunit by binding and bridging several RNA helices of the 16S rRNA. Forms an intersubunit bridge (bridge B4) with the 23S rRNA of the 50S subunit in the ribosome. This chain is Small ribosomal subunit protein uS15, found in Streptococcus pyogenes serotype M2 (strain MGAS10270).